A 271-amino-acid polypeptide reads, in one-letter code: Phosphatidylglycerol--prolipoprotein diacylglyceryl transferase (271 aa).

Helical transmembrane passes span 25-45 (WYGI…KFFV), 60-80 (YFIW…ILIY), 103-123 (FVGI…IATL), and 131-151 (ANPW…YVFG). Position 152 (arginine 152) interacts with a 1,2-diacyl-sn-glycero-3-phospho-(1'-sn-glycerol). 3 helical membrane-spanning segments follow: residues 181–201 (PSQL…VYLA), 209–229 (GELI…CEFY), and 235–255 (GIGF…IMFI).

This sequence belongs to the Lgt family.

It is found in the cell inner membrane. It catalyses the reaction L-cysteinyl-[prolipoprotein] + a 1,2-diacyl-sn-glycero-3-phospho-(1'-sn-glycerol) = an S-1,2-diacyl-sn-glyceryl-L-cysteinyl-[prolipoprotein] + sn-glycerol 1-phosphate + H(+). Its pathway is protein modification; lipoprotein biosynthesis (diacylglyceryl transfer). Functionally, catalyzes the transfer of the diacylglyceryl group from phosphatidylglycerol to the sulfhydryl group of the N-terminal cysteine of a prolipoprotein, the first step in the formation of mature lipoproteins. The chain is Phosphatidylglycerol--prolipoprotein diacylglyceryl transferase from Campylobacter jejuni (strain RM1221).